The chain runs to 606 residues: Kelch-like protein 41 (606 aa).

Position 3 is a phosphoserine (Ser-3). The 68-residue stretch at 33 to 100 folds into the BTB domain; that stretch reads IDCTLKAGDK…LYSASIDLND (68 aa). The region spanning 135–237 is the BACK domain; the sequence is CLAILRLGLL…TEKYFKDHVE (103 aa). Kelch repeat units lie at residues 346-398, 399-447, 448-495, 497-542, and 544-599; these read QIYV…EVDD, KIYV…SHKG, MIYC…VHKG, IVIA…SLAG, and LYAI…TRLN.

As to quaternary structure, interacts with NRAP. Interacts with LASP1. Part of a complex that contains CUL3, RBX1 and KLHL41. Ubiquitinated by E3 ubiquitin ligase complex formed by CUL3 and RBX1 and probably targeted for proteasome-independent degradation. Quinone-induced oxidative stress increases its ubiquitination. As to expression, sarcomeric muscle.

Its subcellular location is the cytoplasm. It is found in the cytoskeleton. The protein resides in the cell projection. It localises to the pseudopodium. The protein localises to the ruffle. Its subcellular location is the myofibril. It is found in the sarcomere. The protein resides in the m line. It localises to the sarcoplasmic reticulum membrane. The protein localises to the endoplasmic reticulum membrane. Functionally, involved in skeletal muscle development and differentiation. Regulates proliferation and differentiation of myoblasts and plays a role in myofibril assembly by promoting lateral fusion of adjacent thin fibrils into mature, wide myofibrils. Required for pseudopod elongation in transformed cells. This chain is Kelch-like protein 41 (KLHL41), found in Homo sapiens (Human).